Reading from the N-terminus, the 89-residue chain is UPF0223 protein BCE_4008 (89 aa).

The protein belongs to the UPF0223 family.

This chain is UPF0223 protein BCE_4008, found in Bacillus cereus (strain ATCC 10987 / NRS 248).